Here is a 101-residue protein sequence, read N- to C-terminus: Large ribosomal subunit protein uL24 (101 aa).

The protein belongs to the universal ribosomal protein uL24 family. In terms of assembly, part of the 50S ribosomal subunit.

In terms of biological role, one of two assembly initiator proteins, it binds directly to the 5'-end of the 23S rRNA, where it nucleates assembly of the 50S subunit. Its function is as follows. One of the proteins that surrounds the polypeptide exit tunnel on the outside of the subunit. In Borrelia garinii subsp. bavariensis (strain ATCC BAA-2496 / DSM 23469 / PBi) (Borreliella bavariensis), this protein is Large ribosomal subunit protein uL24.